We begin with the raw amino-acid sequence, 1110 residues long: Serine/threonine-protein kinase PknK (1110 aa).

Positions 26 to 283 (FDNVEEIGRG…TAADVGEELR (258 aa)) constitute a Protein kinase domain. Residues 32 to 40 (IGRGGFGVV) and K55 each bind ATP. The active-site Proton acceptor is D149. Mg(2+)-binding residues include N154 and D167. Residues T179 and T181 each carry the phosphothreonine; by autocatalysis modification. Positions 308-343 (RSPEAHAAHRHTGGGTPTVPTPPTPATKYRPSVPTG) are disordered.

The protein belongs to the protein kinase superfamily. Ser/Thr protein kinase family. As to quaternary structure, forms oligomeric complexes in solution. Can autophosphorylate the carboxyl terminal region in addition to Thr-179 and Thr-181.

The protein resides in the cytoplasm. It is found in the cell membrane. It localises to the secreted. Its subcellular location is the cell wall. The enzyme catalyses L-seryl-[protein] + ATP = O-phospho-L-seryl-[protein] + ADP + H(+). It carries out the reaction L-threonyl-[protein] + ATP = O-phospho-L-threonyl-[protein] + ADP + H(+). In terms of biological role, key microbial factor involved in regulation of early and late events in tuberculosis infection, and in host-pathogen interactions. The chain is Serine/threonine-protein kinase PknK (pknK) from Mycobacterium tuberculosis (strain CDC 1551 / Oshkosh).